We begin with the raw amino-acid sequence, 410 residues long: Tryptophan synthase beta chain (410 aa).

N6-(pyridoxal phosphate)lysine is present on K98.

This sequence belongs to the TrpB family. As to quaternary structure, tetramer of two alpha and two beta chains. Pyridoxal 5'-phosphate is required as a cofactor.

It catalyses the reaction (1S,2R)-1-C-(indol-3-yl)glycerol 3-phosphate + L-serine = D-glyceraldehyde 3-phosphate + L-tryptophan + H2O. The protein operates within amino-acid biosynthesis; L-tryptophan biosynthesis; L-tryptophan from chorismate: step 5/5. Its function is as follows. The beta subunit is responsible for the synthesis of L-tryptophan from indole and L-serine. The polypeptide is Tryptophan synthase beta chain (Roseobacter denitrificans (strain ATCC 33942 / OCh 114) (Erythrobacter sp. (strain OCh 114))).